Consider the following 45-residue polypeptide: NLR family pyrin domain-containing protein 2B (45 aa).

Expressed in all tissues tested, including spleen, lymph node, thymus, tonsil, peripheral blood leukocyte, bone marrow, liver, heart, brain, placenta, lung, skeletal muscle, kidney and pancreas.

The protein resides in the cytoplasm. The protein localises to the nucleus. Its function is as follows. May function as a negative regulator of NF-kappa-B by preventing RELA/p65 phosphorylation at 'Ser-536', thereby inhibiting its transcriptional activity. Through NF-kappa-B regulation may control cytokine release upon Toll-like receptors activation and therefore play a role in modulation of innate immunity. May also play a role in cell cycle progression and apoptotic process. This Homo sapiens (Human) protein is NLR family pyrin domain-containing protein 2B.